A 205-amino-acid chain; its full sequence is MSKRHSAKYKIDRRMGENLWGRPKSPVNQRSYGPGQHGQRRKQKVSDFGLQLRAKQKLKGYYGNLTEKQFSRTYEEAARRKGNTAENLVGLLESRLDAIVYRAKFVPTVFAARQFVNHGHVTVNGKRVNIASYRCKIGDVIAVREKSRNMALVLEAVASSERDFCEYITVDAKGLEASFIRVPELSEVPYPVKMEPNLVVEFYAS.

The tract at residues 1-46 (MSKRHSAKYKIDRRMGENLWGRPKSPVNQRSYGPGQHGQRRKQKVS) is disordered. Positions 94–154 (SRLDAIVYRA…EKSRNMALVL (61 aa)) constitute an S4 RNA-binding domain.

It belongs to the universal ribosomal protein uS4 family. Part of the 30S ribosomal subunit. Contacts protein S5. The interaction surface between S4 and S5 is involved in control of translational fidelity.

One of the primary rRNA binding proteins, it binds directly to 16S rRNA where it nucleates assembly of the body of the 30S subunit. Functionally, with S5 and S12 plays an important role in translational accuracy. In Caulobacter sp. (strain K31), this protein is Small ribosomal subunit protein uS4.